The chain runs to 151 residues: Large ribosomal subunit protein uL22 (151 aa).

This sequence belongs to the universal ribosomal protein uL22 family. Part of the 50S ribosomal subunit.

This protein binds specifically to 23S rRNA. It makes multiple contacts with different domains of the 23S rRNA in the assembled 50S subunit and ribosome. Functionally, the globular domain of the protein is located near the polypeptide exit tunnel on the outside of the subunit, while an extended beta-hairpin is found that lines the wall of the exit tunnel in the center of the 70S ribosome. The sequence is that of Large ribosomal subunit protein uL22 from Thermoplasma acidophilum (strain ATCC 25905 / DSM 1728 / JCM 9062 / NBRC 15155 / AMRC-C165).